Here is a 690-residue protein sequence, read N- to C-terminus: MSCFSQVLNPITGENSWQEREDDYDYHQEVANAGFGDMLHDWERNQKYFAALRKTIAEMRTAGKEVHVLDIGTGTGILSMMALEAGADSVTACEAFLPMANCAEKILAANGAADKVRLIRKRSTDIQIGEDMPRKANLLVAELLDTELIGEGAIGIYNHAHDELLTEDALCIPARARCYAQVAQSPLAAQWNSLKSLANLDGEPLLQPPAQLKGCKGEAGLHDVQLSQLPSHTFRPLTDPVEIFQFDFQRKKQREKKRDQLLKVQSNQPGSAELVFYWWDIQLDDGGEILLSCAPYWAHPEIHELSGKKGKDLPLPNVVPWRDHWMQAIYYIPKPLQLLEAGKSFHLSCHHDEYSLWFDAREEAPAKSVSRHTCTCDLHMTYSRSRIGQMNQSTRNKRYLRYLEENIEAEKSKVLVLGNGCLLGLASSALGATSVQLHEPHRFSRRLLESIVQHNQLKNVEFVDKVEEVEDSQLAGLTHVFAEPYFLNAILPWDNFYFGTLLAKIKDKLPEDVKISPCSARIYALPVEFLDLHKIRAPVVSCEGFDLRLFDEMVERSAEQAVTLVEAQPLWEYPCRALSEPQEILNVDFNKFSEEHHLKGTIDLKHPGTCNGVALWVDWQLINDSSPRSIVSTGPSEAVTPGEFVKWDMFVRQGVHFPQKTNQTISSLAWSTDFKPLLGQLSFTFGQKKP.

SAM-dependent MTase PRMT-type domains are found at residues 14–357 and 366–690; these read ENSW…YSLW and AKSV…QKKP.

Belongs to the class I-like SAM-binding methyltransferase superfamily. Protein arginine N-methyltransferase family. PRMT7 subfamily.

Functionally, essential arginine methyltransferase that can both catalyze the formation of omega-N monomethylarginine (MMA) and symmetrical dimethylarginine (sDMA). Specifically mediates the symmetrical dimethylation of arginine residues in the small nuclear ribonucleoproteins SmD1 and SmD3. In Drosophila ananassae (Fruit fly), this protein is Protein arginine N-methyltransferase 7 (Art7).